The sequence spans 142 residues: Transcription antitermination protein NusB (142 aa).

It belongs to the NusB family.

Functionally, involved in transcription antitermination. Required for transcription of ribosomal RNA (rRNA) genes. Binds specifically to the boxA antiterminator sequence of the ribosomal RNA (rrn) operons. This Streptococcus uberis (strain ATCC BAA-854 / 0140J) protein is Transcription antitermination protein NusB.